The chain runs to 321 residues: Ribose-phosphate pyrophosphokinase (321 aa).

Residues 44–46 and 103–104 each bind ATP; these read DGE and RQ. Mg(2+) is bound by residues histidine 137 and aspartate 179. Residue lysine 202 is part of the active site. Residues arginine 204, aspartate 228, and 232–236 contribute to the D-ribose 5-phosphate site; that span reads DTAGT.

Belongs to the ribose-phosphate pyrophosphokinase family. Class I subfamily. As to quaternary structure, homohexamer. Mg(2+) is required as a cofactor.

The protein resides in the cytoplasm. It catalyses the reaction D-ribose 5-phosphate + ATP = 5-phospho-alpha-D-ribose 1-diphosphate + AMP + H(+). The protein operates within metabolic intermediate biosynthesis; 5-phospho-alpha-D-ribose 1-diphosphate biosynthesis; 5-phospho-alpha-D-ribose 1-diphosphate from D-ribose 5-phosphate (route I): step 1/1. Its function is as follows. Involved in the biosynthesis of the central metabolite phospho-alpha-D-ribosyl-1-pyrophosphate (PRPP) via the transfer of pyrophosphoryl group from ATP to 1-hydroxyl of ribose-5-phosphate (Rib-5-P). The polypeptide is Ribose-phosphate pyrophosphokinase (Staphylococcus haemolyticus (strain JCSC1435)).